The chain runs to 670 residues: MDKQTAADRVAALRTELERHNRLYYAEDRPEITDAEYDLLFRELVDLETRFPDLAAPDSPTQRVGGAPLDKFEQVTHRIPMLSLENAFTDVEIADFDDRVKRFLGLHGDVEIDYVCEPKMDGLAVELVYERGILTVGSTRGDGVVGENVTHNLKTVRGIPLRLRCEQPPELLEVRGEVYLPLAAFQRLNAQREEEGEPPFANPRNAAAGSIRQLDSRITARRPLAIFCYAPGEVRGASFAAQTEFLDRIGEWGLPVNPLIRPVKGVAEILAYYREMTERRDSLPYEIDGVVVKVDSFALQRELGEKSRSPRWAVAVKFPPRQAVTVVEDIVPSVGRTGVITPTANLRPVEVSGVTVSRATLHNWEEMERKDIRIGDTVVIERAGDVIPAVVKVLTEKRSGSERPLPIPAVCPECGSEVVKIPDEVAVRCMGLSCPAQIRESIIHFASRDAMDMEGLGEKYIEQLLRLGLVKNVADLYTLTKDQFMQFDRMGDKLAENLLNAIEASKQRELSRFIFALGIRHVGEHTAKLLAGAFGSIENLERATEEELLSIREVGPQVARSIITFFRNEGNRETIRRMFKAGVRPTAEEKKVGGRFTGKTFVFTGALTRFSRPEAQKMVEKEGGHAAGSVSKKTDYVVAGAEAGSKLDKARQLGVRVLTEDEFLAMLEEG.

NAD(+) is bound by residues 34-38, 83-84, and Glu117; these read DAEYD and SL. The N6-AMP-lysine intermediate role is filled by Lys119. Arg140, Glu177, Lys293, and Lys317 together coordinate NAD(+). Zn(2+) is bound by residues Cys411, Cys414, Cys429, and Cys434. A BRCT domain is found at 591–670; sequence KVGGRFTGKT…DEFLAMLEEG (80 aa).

It belongs to the NAD-dependent DNA ligase family. LigA subfamily. Requires Mg(2+) as cofactor. It depends on Mn(2+) as a cofactor.

It catalyses the reaction NAD(+) + (deoxyribonucleotide)n-3'-hydroxyl + 5'-phospho-(deoxyribonucleotide)m = (deoxyribonucleotide)n+m + AMP + beta-nicotinamide D-nucleotide.. In terms of biological role, DNA ligase that catalyzes the formation of phosphodiester linkages between 5'-phosphoryl and 3'-hydroxyl groups in double-stranded DNA using NAD as a coenzyme and as the energy source for the reaction. It is essential for DNA replication and repair of damaged DNA. The sequence is that of DNA ligase from Geobacter sulfurreducens (strain ATCC 51573 / DSM 12127 / PCA).